Reading from the N-terminus, the 134-residue chain is ATP synthase epsilon chain (134 aa).

A compositionally biased stretch (basic and acidic residues) spans 94 to 104 (AKLAKSRAESH). Residues 94 to 115 (AKLAKSRAESHLEDDDDNTDIN) form a disordered region.

It belongs to the ATPase epsilon chain family. In terms of assembly, F-type ATPases have 2 components, CF(1) - the catalytic core - and CF(0) - the membrane proton channel. CF(1) has five subunits: alpha(3), beta(3), gamma(1), delta(1), epsilon(1). CF(0) has three main subunits: a, b and c.

The protein localises to the cell membrane. Produces ATP from ADP in the presence of a proton gradient across the membrane. This is ATP synthase epsilon chain from Staphylococcus epidermidis (strain ATCC 12228 / FDA PCI 1200).